Consider the following 817-residue polypeptide: Putative ATP-dependent RNA helicase R350 (817 aa).

Residues 1-29 (MNRRNRSNDLNPEPSIENPNNQIAEEFPG) are disordered. The segment covering 17 to 29 (ENPNNQIAEEFPG) has biased composition (polar residues). Positions 93 to 271 (LNPQGPYTSI…ALMFNLLRPG (179 aa)) constitute a Helicase ATP-binding domain. 106–113 (HGLGSGKT) serves as a coordination point for ATP. Positions 206–209 (DEAH) match the DEAH box motif. The 167-residue stretch at 495-661 (LAIAFMTYIS…STDEYVEDQA (167 aa)) folds into the Helicase C-terminal domain.

It belongs to the DEAD box helicase family. DEAH subfamily.

It localises to the virion. The catalysed reaction is ATP + H2O = ADP + phosphate + H(+). This Acanthamoeba polyphaga mimivirus (APMV) protein is Putative ATP-dependent RNA helicase R350.